The primary structure comprises 136 residues: Ribonuclease VapC47 (136 aa).

The region spanning I2–I104 is the PINc domain. The Mg(2+) site is built by D5 and D94.

Belongs to the PINc/VapC protein family. Requires Mg(2+) as cofactor.

In terms of biological role, toxic component of a type II toxin-antitoxin (TA) system. An RNase. Its toxic effect on colony formation is neutralized by coexpression with cognate antitoxin VapB47. The sequence is that of Ribonuclease VapC47 from Mycobacterium tuberculosis (strain CDC 1551 / Oshkosh).